Here is a 632-residue protein sequence, read N- to C-terminus: 1-deoxy-D-xylulose-5-phosphate synthase (632 aa).

Thiamine diphosphate contacts are provided by residues His75 and 117 to 119; that span reads GHA. Asp146 serves as a coordination point for Mg(2+). Thiamine diphosphate contacts are provided by residues 147–148, Asn175, and Glu370; that span reads AA. A Mg(2+)-binding site is contributed by Asn175.

This sequence belongs to the transketolase family. DXPS subfamily. As to quaternary structure, homodimer. Requires Mg(2+) as cofactor. Thiamine diphosphate is required as a cofactor.

The enzyme catalyses D-glyceraldehyde 3-phosphate + pyruvate + H(+) = 1-deoxy-D-xylulose 5-phosphate + CO2. It functions in the pathway metabolic intermediate biosynthesis; 1-deoxy-D-xylulose 5-phosphate biosynthesis; 1-deoxy-D-xylulose 5-phosphate from D-glyceraldehyde 3-phosphate and pyruvate: step 1/1. In terms of biological role, catalyzes the acyloin condensation reaction between C atoms 2 and 3 of pyruvate and glyceraldehyde 3-phosphate to yield 1-deoxy-D-xylulose-5-phosphate (DXP). The chain is 1-deoxy-D-xylulose-5-phosphate synthase from Chlamydia muridarum (strain MoPn / Nigg).